The sequence spans 463 residues: V-type proton ATPase subunit S1 (463 aa).

The first 32 residues, 1 to 32, serve as a signal peptide directing secretion; that stretch reads MMAATVVSRIRTGTGRAPVMWLSLSLVAVAAA. Positions 33–225 are excised as a propeptide; sequence VATEQQVPLV…TAVRPSRVAR (193 aa). Residues 33 to 412 are Lumenal-facing; sequence VATEQQVPLV…EQFSYASDCA (380 aa). N-linked (GlcNAc...) asparagine glycans are attached at residues Asn164, Asn255, Asn267, Asn290, Asn297, Asn344, Asn351, and Asn399. A disulfide bond links Cys365 and Cys411. A helical transmembrane segment spans residues 413-433; the sequence is GFFSPGIWMGLLTTLFMLFIF. Residues 434 to 463 are Cytoplasmic-facing; that stretch reads TYGLHMILSLKTMDRFDDHKGPTITLTQIV.

The protein belongs to the vacuolar ATPase subunit S1 family. Accessory component of the multisubunit proton-transporting vacuolar (V)-ATPase protein pump. Interacts (via N-terminus) with ATP6AP2 (via N-terminus). Interacts with RNASEK. Interacts with TMEM106B (via C-terminus). In terms of processing, N-glycosylated. In terms of tissue distribution, expressed in brain cortex (at protein level). Highly expressed in islets of Langerhans. Expressed in pancreatic acini, pituitary gland, adrenal gland, lung, brain and bone marrow.

It is found in the endoplasmic reticulum membrane. Its subcellular location is the endoplasmic reticulum-Golgi intermediate compartment membrane. It localises to the cytoplasmic vesicle. The protein resides in the secretory vesicle. The protein localises to the synaptic vesicle membrane. It is found in the clathrin-coated vesicle membrane. Functionally, accessory subunit of the proton-transporting vacuolar (V)-ATPase protein pump, which is required for luminal acidification of secretory vesicles. Guides the V-type ATPase into specialized subcellular compartments, such as neuroendocrine regulated secretory vesicles or the ruffled border of the osteoclast, thereby regulating its activity. Involved in membrane trafficking and Ca(2+)-dependent membrane fusion. May play a role in the assembly of the V-type ATPase complex. In aerobic conditions, involved in intracellular iron homeostasis, thus triggering the activity of Fe(2+) prolyl hydroxylase (PHD) enzymes, and leading to HIF1A hydroxylation and subsequent proteasomal degradation. In islets of Langerhans cells, may regulate the acidification of dense-core secretory granules. This chain is V-type proton ATPase subunit S1 (Atp6ap1), found in Mus musculus (Mouse).